A 282-amino-acid chain; its full sequence is Pantothenate synthetase (282 aa).

Position 30 to 37 (30 to 37 (MGYLHEGH)) interacts with ATP. His-37 serves as the catalytic Proton donor. Residue Gln-61 participates in (R)-pantoate binding. Gln-61 is a beta-alanine binding site. 147–150 (GMKD) contacts ATP. Gln-153 contributes to the (R)-pantoate binding site. Residues Val-176 and 184-187 (KSSR) each bind ATP.

The protein belongs to the pantothenate synthetase family. In terms of assembly, homodimer.

It is found in the cytoplasm. The catalysed reaction is (R)-pantoate + beta-alanine + ATP = (R)-pantothenate + AMP + diphosphate + H(+). The protein operates within cofactor biosynthesis; (R)-pantothenate biosynthesis; (R)-pantothenate from (R)-pantoate and beta-alanine: step 1/1. Functionally, catalyzes the condensation of pantoate with beta-alanine in an ATP-dependent reaction via a pantoyl-adenylate intermediate. In Bacillus cereus (strain ATCC 14579 / DSM 31 / CCUG 7414 / JCM 2152 / NBRC 15305 / NCIMB 9373 / NCTC 2599 / NRRL B-3711), this protein is Pantothenate synthetase.